A 281-amino-acid chain; its full sequence is Pantothenate synthetase (281 aa).

Residue 30–37 (MGYLHEGH) coordinates ATP. His-37 acts as the Proton donor in catalysis. A (R)-pantoate-binding site is contributed by Gln-61. Gln-61 contacts beta-alanine. 147 to 150 (GEKD) contributes to the ATP binding site. Gln-153 is a (R)-pantoate binding site. ATP-binding positions include Ile-176 and 184-187 (KSSR).

It belongs to the pantothenate synthetase family. In terms of assembly, homodimer.

The protein localises to the cytoplasm. It carries out the reaction (R)-pantoate + beta-alanine + ATP = (R)-pantothenate + AMP + diphosphate + H(+). Its pathway is cofactor biosynthesis; (R)-pantothenate biosynthesis; (R)-pantothenate from (R)-pantoate and beta-alanine: step 1/1. Its function is as follows. Catalyzes the condensation of pantoate with beta-alanine in an ATP-dependent reaction via a pantoyl-adenylate intermediate. This Clostridium botulinum (strain Kyoto / Type A2) protein is Pantothenate synthetase.